Consider the following 293-residue polypeptide: Large ribosomal RNA subunit accumulation protein YCED homolog 1, chloroplastic (293 aa).

Residues Met-1–Ser-42 constitute a chloroplast transit peptide.

The protein belongs to the DUF177 domain family. As to expression, highly expressed in shoots and leaves. Detected in roots, embryos and endosperm.

The protein resides in the plastid. Its subcellular location is the chloroplast. Its function is as follows. Plays a role in synthesis, processing and/or stability of 23S rRNA. Required for embryogenesis. May be involved in RPL23 transcript levels regulation in non-photosynthetic plastids. This is Large ribosomal RNA subunit accumulation protein YCED homolog 1, chloroplastic from Zea mays (Maize).